The following is a 178-amino-acid chain: MTSVNLSYPIGEYKPRESISKEQKDKWIQVLEEVPAKLKQAVEVMTDSQLDTPYRDGGWTVRQVVHHLADSHMNSYIRFKLSLTEETPAIRPYDEKAWSELKDSKTADPSGSLALLQELHGRWTALLRTLTDQQFKRGFYHPDTKEIITLENALGLYVWHSHHHIAHITELSRRMGWS.

Positions 67, 160, and 164 each coordinate Zn(2+).

This sequence belongs to the metal hydrolase YfiT family. Homodimer. It depends on Zn(2+) as a cofactor. Requires Ni(2+) as cofactor.

The protein resides in the cytoplasm. Its function is as follows. Possible metal-dependent hydrolase. The sequence is that of Putative metal-dependent hydrolase YfiT (yfiT) from Bacillus subtilis (strain 168).